The following is a 159-amino-acid chain: Dihydrofolate reductase (159 aa).

Residues 2–157 (TLSILVAHDL…IPHTFLHLIR (156 aa)) enclose the DHFR domain. 6-8 (LVA) is a substrate binding site. NADP(+) is bound by residues 7-8 (VA) and 15-20 (IGFENQ). Asp28 contributes to the substrate binding site. 44 to 47 (GRKT) contributes to the NADP(+) binding site. Arg58 is a binding site for substrate. Residues 63-66 (LTSD) and 93-98 (FGGQTL) contribute to the NADP(+) site. Thr112 contacts substrate.

This sequence belongs to the dihydrofolate reductase family.

The enzyme catalyses (6S)-5,6,7,8-tetrahydrofolate + NADP(+) = 7,8-dihydrofolate + NADPH + H(+). The protein operates within cofactor biosynthesis; tetrahydrofolate biosynthesis; 5,6,7,8-tetrahydrofolate from 7,8-dihydrofolate: step 1/1. In terms of biological role, key enzyme in folate metabolism. Catalyzes an essential reaction for de novo glycine and purine synthesis, and for DNA precursor synthesis. This Staphylococcus aureus (strain COL) protein is Dihydrofolate reductase (folA).